A 576-amino-acid chain; its full sequence is Arginine--tRNA ligase (576 aa).

The short motif at 122-132 is the 'HIGH' region element; it reads PNVAKQMHVGH.

This sequence belongs to the class-I aminoacyl-tRNA synthetase family. As to quaternary structure, monomer.

It localises to the cytoplasm. The catalysed reaction is tRNA(Arg) + L-arginine + ATP = L-arginyl-tRNA(Arg) + AMP + diphosphate. The sequence is that of Arginine--tRNA ligase from Yersinia enterocolitica serotype O:8 / biotype 1B (strain NCTC 13174 / 8081).